Here is a 717-residue protein sequence, read N- to C-terminus: Ferric reduction oxidase 3, mitochondrial (717 aa).

A mitochondrion-targeting transit peptide spans 1–23; that stretch reads MAARGRLVVARGNRSFSSIIRKY. 6 helical membrane passes run 40–59, 86–104, 140–163, 232–255, 306–330, and 353–373; these read LLTM…MPTS, LLVY…SIYL, LGIV…WSLA, YHIW…CIYW, THYL…LISF, and LVSA…KNPM. Positions 198–317 constitute a Ferric oxidoreductase domain; the sequence is GLTGNICLGF…YLYMVFMLFF (120 aa). Histidine 233, histidine 247, histidine 307, and histidine 320 together coordinate heme. Residues 346-451 enclose the FAD-binding FR-type domain; sequence QSRNNVKLVS…EGPYGPASTD (106 aa). 395–398 contacts FAD; the sequence is HPFT. Position 443–446 (443–446) interacts with NAD(+); sequence GPYG. 2 helical membrane passes run 564-586 and 606-627; these read WLWL…AIIS and SLIY…AMLC.

This sequence belongs to the ferric reductase (FRE) family. The cofactor is FAD. Expressed in root steele. Detected in shoots, leaves, stems, siliques, flowers and cotyledons.

The protein localises to the mitochondrion membrane. It catalyses the reaction 2 a Fe(II)-siderophore + NAD(+) + H(+) = 2 a Fe(III)-siderophore + NADH. Ferric chelate reductase involved in iron reduction in roots. May participate in the transport of electrons to a Fe(3+) ion via FAD and heme intermediates. This is Ferric reduction oxidase 3, mitochondrial (FRO3) from Arabidopsis thaliana (Mouse-ear cress).